A 300-amino-acid chain; its full sequence is Ribonuclease HIII (300 aa).

Residues 86–300 form the RNase H type-2 domain; that stretch reads RSRIGVDESG…FNEVLGSGNQ (215 aa). Residues D92, E93, and D196 each coordinate a divalent metal cation.

This sequence belongs to the RNase HII family. RnhC subfamily. Requires Mn(2+) as cofactor. It depends on Mg(2+) as a cofactor.

Its subcellular location is the cytoplasm. It catalyses the reaction Endonucleolytic cleavage to 5'-phosphomonoester.. In terms of biological role, endonuclease that specifically degrades the RNA of RNA-DNA hybrids. In Chlamydia trachomatis serovar A (strain ATCC VR-571B / DSM 19440 / HAR-13), this protein is Ribonuclease HIII.